The primary structure comprises 463 residues: Ribosomal protein uS12 methylthiotransferase RimO (463 aa).

In terms of domain architecture, MTTase N-terminal spans 15-130; it reads PKVGMVSLGC…VMQAVHSHLP (116 aa). Residues Cys24, Cys60, Cys89, Cys161, Cys165, and Cys168 each coordinate [4Fe-4S] cluster. Positions 147–392 constitute a Radical SAM core domain; that stretch reads LTPRHYAYLK…MEVAEEVSAA (246 aa). One can recognise a TRAM domain in the interval 395-463; that stretch reads ARKIGKTLKV…ADSHDLWGEV (69 aa).

The protein belongs to the methylthiotransferase family. RimO subfamily. The cofactor is [4Fe-4S] cluster.

The protein localises to the cytoplasm. The enzyme catalyses L-aspartate(89)-[ribosomal protein uS12]-hydrogen + (sulfur carrier)-SH + AH2 + 2 S-adenosyl-L-methionine = 3-methylsulfanyl-L-aspartate(89)-[ribosomal protein uS12]-hydrogen + (sulfur carrier)-H + 5'-deoxyadenosine + L-methionine + A + S-adenosyl-L-homocysteine + 2 H(+). Its function is as follows. Catalyzes the methylthiolation of an aspartic acid residue of ribosomal protein uS12. The sequence is that of Ribosomal protein uS12 methylthiotransferase RimO from Burkholderia pseudomallei (strain 668).